The sequence spans 517 residues: Crotonobetaine/carnitine--CoA ligase (517 aa).

The protein belongs to the ATP-dependent AMP-binding enzyme family.

The enzyme catalyses 4-(trimethylamino)butanoate + ATP + CoA = 4-(trimethylamino)butanoyl-CoA + AMP + diphosphate. The catalysed reaction is crotonobetaine + ATP + CoA = crotonobetainyl-CoA + AMP + diphosphate. It catalyses the reaction (R)-carnitine + ATP + CoA = (R)-carnitinyl-CoA + AMP + diphosphate. Its pathway is amine and polyamine metabolism; carnitine metabolism. Its function is as follows. Catalyzes the transfer of CoA to carnitine, generating the initial carnitinyl-CoA needed for the CaiB reaction cycle. Also has activity toward crotonobetaine and gamma-butyrobetaine. The sequence is that of Crotonobetaine/carnitine--CoA ligase from Salmonella heidelberg (strain SL476).